A 154-amino-acid chain; its full sequence is Transcription antitermination protein NusB (154 aa).

Belongs to the NusB family.

Functionally, involved in transcription antitermination. Required for transcription of ribosomal RNA (rRNA) genes. Binds specifically to the boxA antiterminator sequence of the ribosomal RNA (rrn) operons. The chain is Transcription antitermination protein NusB from Methylobacillus flagellatus (strain ATCC 51484 / DSM 6875 / VKM B-1610 / KT).